A 461-amino-acid chain; its full sequence is D-phenylhydantoinase (461 aa).

3 residues coordinate a divalent metal cation: H59, H61, and K151. K151 carries the N6-carboxylysine modification. Y156 lines the substrate pocket. H182 and H239 together coordinate a divalent metal cation. Residue S286 participates in substrate binding. D313 serves as a coordination point for a divalent metal cation. N335 is a binding site for substrate.

The protein belongs to the metallo-dependent hydrolases superfamily. Hydantoinase/dihydropyrimidinase family. In terms of assembly, homotetramer. A divalent metal cation serves as cofactor. In terms of processing, carboxylation allows a single lysine to coordinate two divalent metal cations.

It catalyses the reaction D-5-phenylhydantoin + H2O = N-carbamoyl-D-phenylglycine + H(+). Catalyzes the stereospecific hydrolysis of the cyclic amide bond of D-hydantoin derivatives with an aromatic side chains at the 5'-position. Has no activity on dihydropyrimidines. The physiological function is unknown. The sequence is that of D-phenylhydantoinase from Escherichia coli O17:K52:H18 (strain UMN026 / ExPEC).